The sequence spans 554 residues: Inactive sesquithujene synthase (554 aa).

Mg(2+)-binding residues include Asp-308 and Asp-312. Substrate is bound by residues Asp-308, Asp-312, Arg-449, and Asn-452. A DDXXD motif motif is present at residues Asp-308–Asp-312. Residues Asn-452, Ser-456, and Glu-460 each coordinate Mg(2+).

Belongs to the terpene synthase family. Monomer. Mg(2+) serves as cofactor. Requires Mn(2+) as cofactor.

It is found in the cytoplasm. The protein operates within secondary metabolite biosynthesis; terpenoid biosynthesis. In terms of biological role, non-functional sesquiterpene synthase having less than 1% of the activity found in cv. Delprim. The sequence is that of Inactive sesquithujene synthase from Zea mays (Maize).